Here is a 454-residue protein sequence, read N- to C-terminus: UDP-N-acetylmuramoylalanine--D-glutamate ligase (454 aa).

ATP is bound at residue 119-125 (GSNGKTT).

The protein belongs to the MurCDEF family.

It is found in the cytoplasm. It carries out the reaction UDP-N-acetyl-alpha-D-muramoyl-L-alanine + D-glutamate + ATP = UDP-N-acetyl-alpha-D-muramoyl-L-alanyl-D-glutamate + ADP + phosphate + H(+). It participates in cell wall biogenesis; peptidoglycan biosynthesis. Functionally, cell wall formation. Catalyzes the addition of glutamate to the nucleotide precursor UDP-N-acetylmuramoyl-L-alanine (UMA). The polypeptide is UDP-N-acetylmuramoylalanine--D-glutamate ligase (Latilactobacillus sakei subsp. sakei (strain 23K) (Lactobacillus sakei subsp. sakei)).